A 315-amino-acid chain; its full sequence is Methionyl-tRNA formyltransferase (315 aa).

The N-terminal domain stretch occupies residues 2–189 (SDSLRIIFAG…LITTLKQLAD (188 aa)). 113–116 (SLLP) serves as a coordination point for (6S)-5,6,7,8-tetrahydrofolate. A C-terminal domain region spans residues 210–315 (KEEARIDWSL…EWFIPGNRLA (106 aa)).

The protein belongs to the Fmt family.

It carries out the reaction L-methionyl-tRNA(fMet) + (6R)-10-formyltetrahydrofolate = N-formyl-L-methionyl-tRNA(fMet) + (6S)-5,6,7,8-tetrahydrofolate + H(+). Attaches a formyl group to the free amino group of methionyl-tRNA(fMet). The formyl group appears to play a dual role in the initiator identity of N-formylmethionyl-tRNA by promoting its recognition by IF2 and preventing the misappropriation of this tRNA by the elongation apparatus. The sequence is that of Methionyl-tRNA formyltransferase from Salmonella typhi.